A 305-amino-acid polypeptide reads, in one-letter code: MNEQLQKILDTNRHHIQGGQLPTYIPELSKANKEALGIYVADLDGNEYGVGDYEYPFTIQSISKVVTLLLALSDRGEKYVFDKVGMEPTGDPFNSMMKLEVVRPSKPFNPMINAGAIAVTSMIKGDSQKERLERILGFFRQLTENPNLQVNQSVYRSEKITGDRNRSMAYFMKDVGIMQNDIESDLDLYFNQCSIEVTCKDIAKIGRFLANGGVLFETGQQLIDEKYIKMAEAFMVTCGMYNASGEFAIKVGIPAKSGVGGGIMASVPKKMGIGVVGPSLDEKGNSIAGVRVLQKMAEDYGLSIF.

S61, N113, E158, N165, Y189, Y241, and V259 together coordinate substrate.

Belongs to the glutaminase family. In terms of assembly, homotetramer.

It carries out the reaction L-glutamine + H2O = L-glutamate + NH4(+). This is Glutaminase from Alkaliphilus metalliredigens (strain QYMF).